Reading from the N-terminus, the 199-residue chain is MSLFSTSLWTTTVMSIIVGLYMLFHNSGESFDFGSFLLDTSPYTWGLLGIASCVAFGIIGAAWGIFICGTSILGGAVKAPRIKTKNLISIIFCEVVAIYSLIIAIVFSAKINDINPAGFYTKSHYYTGFALFWGGITVGLCNLICGVCVGITGSSAALADAQDASLFVKVLVVEIFGSVLGLFGLIVGLLIGGKASDFS.

Over 1–3 the chain is Vacuolar; sequence MSL. The helical transmembrane segment at 4–24 threads the bilayer; the sequence is FSTSLWTTTVMSIIVGLYMLF. The Cytoplasmic portion of the chain corresponds to 25–46; that stretch reads HNSGESFDFGSFLLDTSPYTWG. Residues 47 to 67 traverse the membrane as a helical segment; that stretch reads LLGIASCVAFGIIGAAWGIFI. The Vacuolar portion of the chain corresponds to 68-86; that stretch reads CGTSILGGAVKAPRIKTKN. A helical transmembrane segment spans residues 87–107; it reads LISIIFCEVVAIYSLIIAIVF. Residues 108–130 are Cytoplasmic-facing; that stretch reads SAKINDINPAGFYTKSHYYTGFA. The chain crosses the membrane as a helical span at residues 131-151; that stretch reads LFWGGITVGLCNLICGVCVGI. Residues 152 to 170 are Vacuolar-facing; it reads TGSSAALADAQDASLFVKV. Residues 171–191 form a helical membrane-spanning segment; the sequence is LVVEIFGSVLGLFGLIVGLLI. Over 192–199 the chain is Cytoplasmic; that stretch reads GGKASDFS.

The protein belongs to the V-ATPase proteolipid subunit family. V-ATPase is a heteromultimeric enzyme composed of a peripheral catalytic V1 complex (components A to H) attached to an integral membrane V0 proton pore complex (components: a, c, c', c'', d, e, f and VOA1). The decameric c-ring forms the proton-conducting pore, and is composed of eight proteolipid subunits c, one subunit c' and one subunit c''.

The protein localises to the vacuole membrane. Proton-conducting pore forming subunit of the V0 complex of vacuolar(H+)-ATPase (V-ATPase), a multisubunit enzyme composed of a peripheral complex (V1) that hydrolyzes ATP and a membrane integral complex (V0) that translocates protons. V-ATPase is responsible for acidifying and maintaining the pH of intracellular compartments. This is Probable V-type proton ATPase 20 kDa proteolipid subunit (vma16) from Schizosaccharomyces pombe (strain 972 / ATCC 24843) (Fission yeast).